A 527-amino-acid chain; its full sequence is Ribonuclease Y 2 (527 aa).

A helical transmembrane segment spans residues 2 to 22; sequence IAMIATAIIGIVAGGGLGWAL. An HD domain is found at 339 to 432; that stretch reads QYFHCGEVGW…VIAADAVSGA (94 aa).

The protein belongs to the RNase Y family.

It is found in the cell membrane. Functionally, endoribonuclease that initiates mRNA decay. In Bdellovibrio bacteriovorus (strain ATCC 15356 / DSM 50701 / NCIMB 9529 / HD100), this protein is Ribonuclease Y 2.